The following is a 451-amino-acid chain: Probable asparagine--tRNA ligase, cytoplasmic (451 aa).

Belongs to the class-II aminoacyl-tRNA synthetase family.

It is found in the cytoplasm. The enzyme catalyses tRNA(Asn) + L-asparagine + ATP = L-asparaginyl-tRNA(Asn) + AMP + diphosphate + H(+). In Encephalitozoon cuniculi (strain GB-M1) (Microsporidian parasite), this protein is Probable asparagine--tRNA ligase, cytoplasmic.